A 206-amino-acid chain; its full sequence is Small ribosomal subunit protein uS4 (206 aa).

Residues 96 to 157 (RRLDNVVYRM…KAKKQVRIQD (62 aa)) form the S4 RNA-binding domain.

The protein belongs to the universal ribosomal protein uS4 family. As to quaternary structure, part of the 30S ribosomal subunit. Contacts protein S5. The interaction surface between S4 and S5 is involved in control of translational fidelity.

One of the primary rRNA binding proteins, it binds directly to 16S rRNA where it nucleates assembly of the body of the 30S subunit. In terms of biological role, with S5 and S12 plays an important role in translational accuracy. In Thioalkalivibrio sulfidiphilus (strain HL-EbGR7), this protein is Small ribosomal subunit protein uS4.